Consider the following 384-residue polypeptide: O-phospho-L-seryl-tRNA:Cys-tRNA synthase 1 (384 aa).

Pyridoxal 5'-phosphate contacts are provided by residues 88 to 89 (AR), N195, and 218 to 220 (SGH). K221 carries the post-translational modification N6-(pyridoxal phosphate)lysine.

This sequence belongs to the SepCysS family. Homodimer. Interacts with SepRS. Pyridoxal 5'-phosphate serves as cofactor.

It carries out the reaction O-phospho-L-seryl-tRNA(Cys) + hydrogen sulfide + H(+) = L-cysteinyl-tRNA(Cys) + phosphate. Converts O-phospho-L-seryl-tRNA(Cys) (Sep-tRNA(Cys)) to L-cysteinyl-tRNA(Cys) (Cys-tRNA(Cys)). The protein is O-phospho-L-seryl-tRNA:Cys-tRNA synthase 1 of Methanocella arvoryzae (strain DSM 22066 / NBRC 105507 / MRE50).